Consider the following 182-residue polypeptide: Small ribosomal subunit protein uS4c (182 aa).

The segment at 12–31 is disordered; it reads PGFTSKRPRSGSDLKNPLRS. The S4 RNA-binding domain occupies 82–143; that stretch reads MRLDNILFRL…KQRSKALIQN (62 aa).

Belongs to the universal ribosomal protein uS4 family. Part of the 30S ribosomal subunit. Contacts protein S5. The interaction surface between S4 and S5 is involved in control of translational fidelity.

Its subcellular location is the plastid. The protein resides in the chloroplast. In terms of biological role, one of the primary rRNA binding proteins, it binds directly to 16S rRNA where it nucleates assembly of the body of the 30S subunit. With S5 and S12 plays an important role in translational accuracy. This Hymenocallis littoralis (Beach spider-lily) protein is Small ribosomal subunit protein uS4c (rps4).